The sequence spans 332 residues: GTP cyclohydrolase-2 (332 aa).

Disordered regions lie at residues methionine 1–histidine 20 and proline 25–glutamate 46. A compositionally biased stretch (polar residues) spans proline 29–proline 41. A GTP-binding site is contributed by arginine 171–glutamate 175. Positions 176, 187, and 189 each coordinate Zn(2+). GTP contacts are provided by residues glutamine 192, glutamate 214 to arginine 216, and threonine 236. The active-site Proton acceptor is aspartate 248. Residue arginine 250 is the Nucleophile of the active site. GTP-binding residues include threonine 271 and lysine 276.

The protein belongs to the GTP cyclohydrolase II family. Zn(2+) serves as cofactor.

It catalyses the reaction GTP + 4 H2O = 2,5-diamino-6-hydroxy-4-(5-phosphoribosylamino)-pyrimidine + formate + 2 phosphate + 3 H(+). It participates in cofactor biosynthesis; riboflavin biosynthesis; 5-amino-6-(D-ribitylamino)uracil from GTP: step 1/4. Catalyzes the conversion of GTP to 2,5-diamino-6-ribosylamino-4(3H)-pyrimidinone 5'-phosphate (DARP), formate and pyrophosphate. The chain is GTP cyclohydrolase-2 (RIB1) from Meyerozyma guilliermondii (strain ATCC 6260 / CBS 566 / DSM 6381 / JCM 1539 / NBRC 10279 / NRRL Y-324) (Yeast).